Reading from the N-terminus, the 747-residue chain is Sulfhydryl oxidase 1 (747 aa).

A signal peptide spans 1–29 (MRRCNSGSGPPPSLLLLLLWLLAVPGANA). Positions 36 to 156 (YSPSDPLTLL…RERLIDALES (121 aa)) constitute a Thioredoxin domain. Catalysis depends on nucleophile residues cysteine 70 and cysteine 73. 2 cysteine pairs are disulfide-bonded: cysteine 70–cysteine 73 and cysteine 101–cysteine 110. An N-linked (GlcNAc...) (complex) asparagine glycan is attached at asparagine 130. Asparagine 243 carries an N-linked (GlcNAc...) asparagine glycan. A disulfide bridge links cysteine 393 with cysteine 405. The 108-residue stretch at 396-503 (SEPHFRGFPC…EDPQFPKVQW (108 aa)) folds into the ERV/ALR sulfhydryl oxidase domain. FAD is bound by residues arginine 401, tryptophan 408, and histidine 412. Phosphoserine; by FAM20C is present on serine 426. A disulfide bridge links cysteine 449 with cysteine 452. Residues aspartate 451, histidine 455, 478-485 (WSSHNRVN), lysine 500, and tryptophan 503 contribute to the FAD site. Residues cysteine 509 and cysteine 512 are joined by a disulfide bond. Residues 573-633 (SRNSTLDPGK…HMAELQRNEQ (61 aa)) form a disordered region. Asparagine 575 carries an N-linked (GlcNAc...) asparagine glycan. Basic and acidic residues predominate over residues 621–633 (PPEHMAELQRNEQ). The chain crosses the membrane as a helical span at residues 710-730 (ISLCVGLYSLSFMGLLAMYTY).

The protein belongs to the quiescin-sulfhydryl oxidase (QSOX) family. In terms of assembly, monomer. It depends on FAD as a cofactor. N-glycosylated. O-glycosylated on Thr and Ser residues. Expressed in heart, placenta, lung, liver, skeletal muscle, pancreas and very weakly in brain and kidney.

The protein localises to the golgi apparatus membrane. The protein resides in the secreted. The enzyme catalyses 2 R'C(R)SH + O2 = R'C(R)S-S(R)CR' + H2O2. Functionally, catalyzes the oxidation of sulfhydryl groups in peptide and protein thiols to disulfides with the reduction of oxygen to hydrogen peroxide. Plays a role in disulfide bond formation in a variety of extracellular proteins. In fibroblasts, required for normal incorporation of laminin into the extracellular matrix, and thereby for normal cell-cell adhesion and cell migration. The sequence is that of Sulfhydryl oxidase 1 (QSOX1) from Homo sapiens (Human).